A 366-amino-acid polypeptide reads, in one-letter code: tRNA/tmRNA (uracil-C(5))-methyltransferase (366 aa).

Gln-190, Tyr-218, Asn-223, Glu-239, and Asp-299 together coordinate S-adenosyl-L-methionine. The Nucleophile role is filled by Cys-324. The active-site Proton acceptor is the Glu-358.

It belongs to the class I-like SAM-binding methyltransferase superfamily. RNA M5U methyltransferase family. TrmA subfamily.

The enzyme catalyses uridine(54) in tRNA + S-adenosyl-L-methionine = 5-methyluridine(54) in tRNA + S-adenosyl-L-homocysteine + H(+). It carries out the reaction uridine(341) in tmRNA + S-adenosyl-L-methionine = 5-methyluridine(341) in tmRNA + S-adenosyl-L-homocysteine + H(+). In terms of biological role, dual-specificity methyltransferase that catalyzes the formation of 5-methyluridine at position 54 (m5U54) in all tRNAs, and that of position 341 (m5U341) in tmRNA (transfer-mRNA). In Citrobacter koseri (strain ATCC BAA-895 / CDC 4225-83 / SGSC4696), this protein is tRNA/tmRNA (uracil-C(5))-methyltransferase.